An 891-amino-acid chain; its full sequence is Inter-alpha-trypsin inhibitor heavy chain H3 (891 aa).

The N-terminal stretch at M1–S20 is a signal peptide. A propeptide spanning residues G21–S34 is cleaved from the precursor. In terms of domain architecture, VIT spans L29–E158. Residue N91 is glycosylated (N-linked (GlcNAc...) asparagine). The VWFA domain maps to S284–V467. An Aspartate 1-(chondroitin 4-sulfate)-ester modification is found at D651. A propeptide spanning residues P652–F891 is cleaved from the precursor.

The protein belongs to the ITIH family. I-alpha-I plasma protease inhibitors are assembled from one or two heavy chains (H1, H2 or H3) and one light chain, bikunin. Inter-alpha-inhibitor (I-alpha-I) is composed of H1, H2 and bikunin, inter-alpha-like inhibitor (I-alpha-LI) of H2 and bikunin, and pre-alpha-inhibitor (P-alpha-I) of H3 and bikunin.

Its subcellular location is the secreted. Its function is as follows. May act as a carrier of hyaluronan in serum or as a binding protein between hyaluronan and other matrix protein, including those on cell surfaces in tissues to regulate the localization, synthesis and degradation of hyaluronan which are essential to cells undergoing biological processes. This chain is Inter-alpha-trypsin inhibitor heavy chain H3 (ITIH3), found in Bos taurus (Bovine).